We begin with the raw amino-acid sequence, 471 residues long: Ubiquitin carboxyl-terminal hydrolase calypso (471 aa).

The region spanning 45–276 (GWLELESDPG…IRFNLMAVVP (232 aa)) is the UCH catalytic domain. The Nucleophile role is filled by Cys131. His213 acts as the Proton donor in catalysis. The interval 307–326 (DEQGESGNGDSQRPDTPTTL) is disordered. The span at 314 to 326 (NGDSQRPDTPTTL) shows a compositional bias: polar residues. In terms of domain architecture, ULD spans 375-403 (NYDKFICTFLSMLAHQGVLGELVSQHLLP). Residues 405 to 471 (KKVSGQGAAN…KGRNKCRKRK (67 aa)) form a positively charged C-terminal tail required for binding nucleosomes region. Residues 412–471 (AANRISKQSNTASAGGSTTGASASTPKTQQQQAAAAKNGKSPSKTPGRRRKGRNKCRKRK) are disordered. A compositionally biased stretch (low complexity) spans 422-447 (TASAGGSTTGASASTPKTQQQQAAAA). A compositionally biased stretch (basic residues) spans 457-471 (PGRRRKGRNKCRKRK).

It belongs to the peptidase C12 family. BAP1 subfamily. In terms of assembly, catalytic component of the polycomb repressive deubiquitinase (PR-DUB) complex, at least composed of caly/calypso, Asx and sba (MBD5/6 homolog). The PR-DUB complex associates with nucleosomes to mediate deubiquitination of histone H2AK118ub1 substrates; the association requires the positively charged C-terminal tail of caly, probably due to direct binding of DNA. Interacts (via ULD domain) with Asx (via DEUBAD domain); the interaction produces a stable heterodimer with a composite binding site for ubiquitin. Homodimerizes (via coiled-coil hinge-region between the UCH and ULD domains) to mediate assembly of 2 copies of the caly-Asx heterodimer into a bisymmetric tetramer; dimerization enhances PR-DUB association with nucleosomes.

Its subcellular location is the nucleus. The catalysed reaction is Thiol-dependent hydrolysis of ester, thioester, amide, peptide and isopeptide bonds formed by the C-terminal Gly of ubiquitin (a 76-residue protein attached to proteins as an intracellular targeting signal).. Its function is as follows. Catalytic component of the polycomb repressive deubiquitinase (PR-DUB) complex, a complex that specifically mediates deubiquitination of histone H2A monoubiquitinated at 'Lys-119' (H2AK118ub1). Mediates bisymmetric organization of the PR-DUB complex and is involved in association with nucleosomes to mediate deubiquitination. Does not deubiquitinate monoubiquitinated histone H2B. Required to maintain the transcriptionally repressive state of homeotic genes throughout development. The PR-DUB complex has weak or no activity toward 'Lys-48'- and 'Lys-63'-linked polyubiquitin chains. Polycomb group (PcG) protein. In Drosophila sechellia (Fruit fly), this protein is Ubiquitin carboxyl-terminal hydrolase calypso.